A 478-amino-acid polypeptide reads, in one-letter code: DNA gyrase subunit B (478 aa).

The Toprim domain occupies cysteine 319 to proline 438. Mg(2+) is bound by residues glutamate 325, aspartate 403, and aspartate 405.

It belongs to the type II topoisomerase GyrB family. As to quaternary structure, heterotetramer, composed of two GyrA and two GyrB chains. In the heterotetramer, GyrA contains the active site tyrosine that forms a transient covalent intermediate with DNA, while GyrB binds cofactors and catalyzes ATP hydrolysis. Mg(2+) serves as cofactor. It depends on Mn(2+) as a cofactor. The cofactor is Ca(2+).

The protein resides in the cytoplasm. It catalyses the reaction ATP-dependent breakage, passage and rejoining of double-stranded DNA.. In terms of biological role, a type II topoisomerase that negatively supercoils closed circular double-stranded (ds) DNA in an ATP-dependent manner to modulate DNA topology and maintain chromosomes in an underwound state. Negative supercoiling favors strand separation, and DNA replication, transcription, recombination and repair, all of which involve strand separation. Also able to catalyze the interconversion of other topological isomers of dsDNA rings, including catenanes and knotted rings. Type II topoisomerases break and join 2 DNA strands simultaneously in an ATP-dependent manner. In Cytophaga aurantiaca, this protein is DNA gyrase subunit B (gyrB).